A 494-amino-acid chain; its full sequence is UPF0371 protein SpyM3_1021 (494 aa).

This sequence belongs to the UPF0371 family.

The chain is UPF0371 protein SpyM3_1021 from Streptococcus pyogenes serotype M3 (strain ATCC BAA-595 / MGAS315).